A 284-amino-acid chain; its full sequence is uncharacterized protein (284 aa).

The protein belongs to the methyltransferase superfamily.

The protein localises to the cytoplasm. The protein resides in the nucleus. Functionally, probable methyltransferase. This is an uncharacterized protein from Schizosaccharomyces pombe (strain 972 / ATCC 24843) (Fission yeast).